Reading from the N-terminus, the 697-residue chain is Putative cryptochrome DASH (697 aa).

One can recognise a Photolyase/cryptochrome alpha/beta domain in the interval 5–164 (KLLVYLLRRD…GFKLWHDEKY (160 aa)). Disordered stretches follow at residues 170–215 (DNGL…FPSW) and 554–697 (FSVT…PPHI). Positions 188–198 (KTQEPLRERPR) are enriched in basic and acidic residues. The segment covering 560–569 (RGNRRPYRWR) has biased composition (basic residues). Over residues 578–590 (GRGGRGGGTGNTS) the composition is skewed to gly residues. Low complexity-rich tracts occupy residues 659–675 (QQQQ…YAHQ) and 683–697 (RQQQ…PPHI).

This sequence belongs to the DNA photolyase class-1 family. Requires FAD as cofactor. (6R)-5,10-methylene-5,6,7,8-tetrahydrofolate is required as a cofactor.

May have a photoreceptor function. The polypeptide is Putative cryptochrome DASH (Gibberella zeae (strain ATCC MYA-4620 / CBS 123657 / FGSC 9075 / NRRL 31084 / PH-1) (Wheat head blight fungus)).